Reading from the N-terminus, the 31-residue chain is MLTLTSYFGFLLAALTITPALFIGLNKIRLI.

A helical membrane pass occupies residues 4 to 24; sequence LTSYFGFLLAALTITPALFIG.

Belongs to the PetL family. In terms of assembly, the 4 large subunits of the cytochrome b6-f complex are cytochrome b6, subunit IV (17 kDa polypeptide, PetD), cytochrome f and the Rieske protein, while the 4 small subunits are PetG, PetL, PetM and PetN. The complex functions as a dimer.

It localises to the plastid. Its subcellular location is the chloroplast thylakoid membrane. In terms of biological role, component of the cytochrome b6-f complex, which mediates electron transfer between photosystem II (PSII) and photosystem I (PSI), cyclic electron flow around PSI, and state transitions. PetL is important for photoautotrophic growth as well as for electron transfer efficiency and stability of the cytochrome b6-f complex. The sequence is that of Cytochrome b6-f complex subunit 6 from Agrostis stolonifera (Creeping bentgrass).